The following is a 319-amino-acid chain: G-protein coupled receptor 55 (319 aa).

The Extracellular segment spans residues 1–21; sequence MSQQNTSGDCLFDGVNELMKT. An N-linked (GlcNAc...) asparagine glycan is attached at Asn-5. Residues 22-42 traverse the membrane as a helical segment; that stretch reads LQFAVHIPTFVLGLLLNLLAI. Residues 43-58 are Cytoplasmic-facing; that stretch reads HGFSTFLKNRWPDYAA. Residues 59–79 form a helical membrane-spanning segment; it reads TSIYMINLAVFDLLLVLSLPF. Residues 80–94 lie on the Extracellular side of the membrane; sequence KMVLSQVQSPFPSLC. Residues 95-115 form a helical membrane-spanning segment; the sequence is TLVECLYFVSMYGSVFTICFI. Over 116-137 the chain is Cytoplasmic; that stretch reads SMDRFLAIRYPLLVSHLRSPRK. A helical membrane pass occupies residues 138–158; that stretch reads IFGICCTIWVLVWTGSIPIYS. Residues 159–180 are Extracellular-facing; the sequence is FHGKVEKYMCFHNMSDDTWSAK. The N-linked (GlcNAc...) asparagine glycan is linked to Asn-171. The chain crosses the membrane as a helical span at residues 181–201; the sequence is VFFPLEVFGFLLPMGIMGFCC. Over 202-231 the chain is Cytoplasmic; the sequence is SRSIHILLGRRDHTQDWVQQKACIYSIAAS. Residues 232 to 252 form a helical membrane-spanning segment; sequence LAVFVVSFLPVHLGFFLQFLV. Residues 253–271 are Extracellular-facing; sequence RNSFIVECRAKQSISFFLQ. Residues 272-292 form a helical membrane-spanning segment; it reads LSMCFSNVNCCLDVFCYYFVI. Residues 293–319 are Cytoplasmic-facing; it reads KEFRMNIRAHRPSRVQLVLQDTTISRG.

Belongs to the G-protein coupled receptor 1 family. As to expression, expressed in the caudate nucleus and putamen, but not detected in the hippocampus, thalamus, pons cerebellum, frontal cortex of the brain or in the liver. Expressed in osteoclasts and osteoblasts. Higly expressed in macrophages and B-cells.

It localises to the cell membrane. Its function is as follows. G-protein coupled receptor that binds to several ligands including 2-arachidonoyl lysophosphatidylinositol or lysophosphatidylglucoside with high affinity, leading to rapid and transient activation of numerous intracellular signaling pathways. Induces the Ca(2+) release from intracellular stores via ERK, the heterotrimeric G protein GNA13 and RHOA leading to morphological changes including cell rounding and stress fiber formation. In macrophages, acts downstream of lysophosphatidylglucoside to inhibit the translocation of the phospholipid-transporting ABCA1 to plasma membrane and subsequent cholesterol efflux leading to lipid accumulation and foam cell formation. In Homo sapiens (Human), this protein is G-protein coupled receptor 55 (GPR55).